A 461-amino-acid chain; its full sequence is UDP-glycosyltransferase 82A1 (461 aa).

Residues Ser292, Ala349–Gln351, His366–Glu374, and Ala388–Gln391 each bind UDP-alpha-D-glucose.

This sequence belongs to the UDP-glycosyltransferase family.

The protein is UDP-glycosyltransferase 82A1 (UGT82A1) of Arabidopsis thaliana (Mouse-ear cress).